Consider the following 507-residue polypeptide: Cell cycle serine/threonine-protein kinase hsk1 (507 aa).

Phosphoserine is present on S22. Residues 68-433 form the Protein kinase domain; that stretch reads YRLIEKIGEG…AEEALDHDFL (366 aa). ATP is bound by residues 74 to 82 and K129; that span reads IGEGTFSSV. D216 (proton acceptor) is an active-site residue. T291 is modified (phosphothreonine). The interval 475–507 is disordered; that stretch reads FKEQEETDEPTSLSKRKRSIDEILPNDALQDGA. S493 is subject to Phosphoserine.

This sequence belongs to the protein kinase superfamily. Ser/Thr protein kinase family. CDC7 subfamily. Heterodimer with the regulatory subunit him1/dfp1. May form homooligomeric complexes. Interacts with mcm10. Post-translationally, autophosphorylated. Phosphorylated by cds1 in vitro.

Its subcellular location is the nucleus. The enzyme catalyses L-seryl-[protein] + ATP = O-phospho-L-seryl-[protein] + ADP + H(+). It catalyses the reaction L-threonyl-[protein] + ATP = O-phospho-L-threonyl-[protein] + ADP + H(+). Phosphorylation of exogenous substrates activated by Dfp1. In terms of biological role, required for G1/S transition. Plays a role in DNA replication checkpoint signaling through regulating rad3 and cds1. Involved in the maintenance of mitotic chromosome structures during S phase through regulating the function of rad21. Required for initiation of mitotic DNA replication through phosphorylating mcm2/cdc19. Required for genome integrity. The protein is Cell cycle serine/threonine-protein kinase hsk1 (hsk1) of Schizosaccharomyces pombe (strain 972 / ATCC 24843) (Fission yeast).